Consider the following 217-residue polypeptide: Large ribosomal subunit protein bL21m (217 aa).

Low complexity predominate over residues 61–81 (PPKVTTATTPEAPAAVPTSTP). Residues 61–87 (PPKVTTATTPEAPAAVPTSTPFSQQPP) are disordered.

This sequence belongs to the bacterial ribosomal protein bL21 family. In terms of assembly, component of the mitochondrial large ribosomal subunit (mt-LSU). Mature N.crassa 74S mitochondrial ribosomes consist of a small (37S) and a large (54S) subunit. The 37S small subunit contains a 16S ribosomal RNA (16S mt-rRNA) and 32 different proteins. The 54S large subunit contains a 23S rRNA (23S mt-rRNA) and 42 different proteins.

It is found in the mitochondrion. Functionally, component of the mitochondrial ribosome (mitoribosome), a dedicated translation machinery responsible for the synthesis of mitochondrial genome-encoded proteins, including at least some of the essential transmembrane subunits of the mitochondrial respiratory chain. The mitoribosomes are attached to the mitochondrial inner membrane and translation products are cotranslationally integrated into the membrane. In Neurospora crassa (strain ATCC 24698 / 74-OR23-1A / CBS 708.71 / DSM 1257 / FGSC 987), this protein is Large ribosomal subunit protein bL21m (mrpl49).